Reading from the N-terminus, the 1053-residue chain is DNA-directed RNA polymerase subunit beta' (1053 aa).

The Zn(2+) site is built by Cys-60, Cys-62, Cys-75, and Cys-78. 3 residues coordinate Mg(2+): Asp-449, Asp-451, and Asp-453.

The protein belongs to the RNA polymerase beta' chain family. In terms of assembly, the RNAP catalytic core consists of 2 alpha, 1 beta, 1 beta' and 1 omega subunit. When a sigma factor is associated with the core the holoenzyme is formed, which can initiate transcription. Requires Mg(2+) as cofactor. It depends on Zn(2+) as a cofactor.

The catalysed reaction is RNA(n) + a ribonucleoside 5'-triphosphate = RNA(n+1) + diphosphate. DNA-dependent RNA polymerase catalyzes the transcription of DNA into RNA using the four ribonucleoside triphosphates as substrates. The polypeptide is DNA-directed RNA polymerase subunit beta' (Brochothrix thermosphacta (Microbacterium thermosphactum)).